A 305-amino-acid chain; its full sequence is Axin interactor, dorsalization-associated protein B (305 aa).

A compositionally biased stretch (acidic residues) spans 126–137 (ENLEVEEEEEDG). The tract at residues 126 to 146 (ENLEVEEEEEDGGAGAGSPDL) is disordered. The interval 153–220 (GTLLPRLPSE…RKEDTYVHFN (68 aa)) is axin-binding. The 148-residue stretch at 156–303 (LPRLPSEPGM…LYLHLLQTLL (148 aa)) folds into the C2 Aida-type domain.

The protein belongs to the AIDA family.

In terms of biological role, acts as a ventralizing factor during embryogenesis. Inhibits axin-mediated JNK activation by binding axin and disrupting axin homodimerization. This in turn antagonizes a Wnt/beta-catenin-independent dorsalization pathway activated by axin/JNK-signaling. This chain is Axin interactor, dorsalization-associated protein B (aida-b), found in Xenopus laevis (African clawed frog).